The chain runs to 1028 residues: Antigenic heat-stable 120 kDa protein (1028 aa).

Composition is skewed to polar residues over residues Gly-359–Gln-384 and Pro-391–Thr-400. The disordered stretch occupies residues Gly-359–Gln-405.

It localises to the cytoplasm. The polypeptide is Antigenic heat-stable 120 kDa protein (sca4) (Rickettsia africae).